The following is a 532-amino-acid chain: Flavin-containing monooxygenase 1 (532 aa).

A2 is modified (N-acetylalanine). Over 2-510 the chain is Lumenal; sequence AKRVAIVGAG…TRIVQESPTP (509 aa). FAD is bound by residues 9 to 13, E32, 40 to 41, and 61 to 62; these read GAGVS, LW, and NS. Residues 60-61 and 195-198 each bind NADP(+); these read SN and SGTD. Residues 511 to 531 traverse the membrane as a helical segment; the sequence is FASLLKLLSLLALLMAIFLIF. Residue L532 is a topological domain, cytoplasmic.

This sequence belongs to the FMO family. FAD is required as a cofactor. In terms of tissue distribution, liver.

It is found in the endoplasmic reticulum membrane. The enzyme catalyses hypotaurine + NADPH + O2 + H(+) = taurine + NADP(+) + H2O. It catalyses the reaction hypotaurine + NADH + O2 + H(+) = taurine + NAD(+) + H2O. It carries out the reaction trimethylamine + NADPH + O2 = trimethylamine N-oxide + NADP(+) + H2O. The catalysed reaction is N,N-dimethylaniline + NADPH + O2 + H(+) = N,N-dimethylaniline N-oxide + NADP(+) + H2O. In terms of biological role, broad spectrum monooxygenase that catalyzes the oxygenation of a wide variety of nitrogen- and sulfur-containing compounds including xenobiotics. Catalyzes the S-oxygenation of hypotaurine to produce taurine, an organic osmolyte involved in cell volume regulation as well as a variety of cytoprotective and developmental processes. In vitro, catalyzes the N-oxygenation of trimethylamine (TMA) to produce trimethylamine N-oxide (TMAO) and could therefore participate to the detoxification of this compound that is generated by the action of gut microbiota from dietary precursors such as choline, choline containing compounds, betaine or L-carnitine. In Canis lupus familiaris (Dog), this protein is Flavin-containing monooxygenase 1 (FMO1).